Consider the following 227-residue polypeptide: Probable minor pilin MMP0600 (227 aa).

Residues 1-7 (MAKFSKG) constitute a propeptide that is removed on maturation. Residues 8 to 16 (QISIELILL) carry the QXSXEXXXL motif.

The N-terminus is probably cleaved by the prepilin peptidase EppA, which recognizes the class III signal sequence.

Its subcellular location is the secreted. The protein resides in the cell surface. It is found in the fimbrium. The sequence is that of Probable minor pilin MMP0600 from Methanococcus maripaludis (strain DSM 14266 / JCM 13030 / NBRC 101832 / S2 / LL).